Consider the following 213-residue polypeptide: Orotate phosphoribosyltransferase (213 aa).

Residue K26 coordinates 5-phospho-alpha-D-ribose 1-diphosphate. Position 34–35 (34–35 (FF)) interacts with orotate. Residues 72–73 (YK), R99, K100, K103, H105, and 124–132 (DDVITAGTA) contribute to the 5-phospho-alpha-D-ribose 1-diphosphate site. Orotate is bound by residues T128 and R156.

Belongs to the purine/pyrimidine phosphoribosyltransferase family. PyrE subfamily. In terms of assembly, homodimer. Requires Mg(2+) as cofactor.

The catalysed reaction is orotidine 5'-phosphate + diphosphate = orotate + 5-phospho-alpha-D-ribose 1-diphosphate. It functions in the pathway pyrimidine metabolism; UMP biosynthesis via de novo pathway; UMP from orotate: step 1/2. Functionally, catalyzes the transfer of a ribosyl phosphate group from 5-phosphoribose 1-diphosphate to orotate, leading to the formation of orotidine monophosphate (OMP). This Haemophilus ducreyi (strain 35000HP / ATCC 700724) protein is Orotate phosphoribosyltransferase.